We begin with the raw amino-acid sequence, 1248 residues long: Period circadian protein homolog 2 (1248 aa).

Residues M1 to K57 are disordered. 2 stretches are compositionally biased toward polar residues: residues P9–V24 and S32–S50. The short motif at L105–V114 is the Nuclear export signal 1 element. The PAS 1 domain maps to I175–L242. An LXXLL motif is present at residues L302–L306. The 67-residue stretch at Y315 to Q381 folds into the PAS 2 domain. Residues Y389–P432 form the PAC domain. The Nuclear export signal 2 motif lies at L456–M465. Disordered regions lie at residues P467–K563 and V619–H638. Positions S474–S478 are important for protein stability. A CSNK1E binding domain region spans residues R506 to K706. Over residues I510–S521 the composition is skewed to polar residues. Residues S521, S524, S527, and S540 each carry the phosphoserine modification. The span at F523 to A534 shows a compositional bias: basic and acidic residues. S656, S690, S694, S703, and S755 each carry phosphoserine. 2 disordered regions span residues D675–P708 and R751–P829. Positions K773–R789 match the Nuclear localization signal motif. Over residues K774–K787 the composition is skewed to basic residues. Positions S816–S827 are enriched in low complexity. The interaction with PPARG stretch occupies residues D873–L1058. S930 bears the Phosphoserine mark. The interval T950 to S971 is disordered. Phosphothreonine is present on T955. Position 962 is a phosphoserine (S962). The Nuclear export signal 3 motif lies at L974 to L981. Positions A984–L1035 are disordered. Low complexity predominate over residues G987–G1004. Residues L1042 to L1046 carry the LXXLL motif. The span at A1057 to S1080 shows a compositional bias: low complexity. Residues A1057 to D1113 form a disordered region. Residues G1083–S1102 are compositionally biased toward polar residues. The span at E1103–T1112 shows a compositional bias: basic and acidic residues. Position 1117 is a phosphoserine (S1117). The CRY binding domain stretch occupies residues S1148–T1248. A disordered region spans residues P1215 to T1248.

As to quaternary structure, homodimer. Component of the circadian core oscillator, which includes the CRY proteins, CLOCK or NPAS2, BMAL1 or BMAL2, CSNK1D and/or CSNK1E, TIMELESS, and the PER proteins. Interacts with CLOCK-BMAL1 (off DNA). Interacts with BMAL2. Interacts directly with PER1 and PER3, and through a C-terminal domain, with CRY1 and CRY2. Interacts (via PAS 2 domain) with TIMELESS. Interacts with NFIL3. Different large complexes have been identified with different repressive functions. The core of PER complexes is composed of at least PER1, PER2, PER3, CRY1, CRY2, CSNK1D and/or CSNK1E. The large PER complex involved in the repression of transcriptional termination is composed of at least PER2, CDK9, DDX5, DHX9, NCBP1 and POLR2A (active). The large PER complex involved in the histone deacetylation is composed of at least HDAC1, PER2, SFPQ and SIN3A. The large PER complex involved in the histone methylation is composed of at least PER2, CBX3, TRIM28, SUV39H1 and/or SUV39H2; CBX3 mediates the formation of the complex. Interacts with SETX; the interaction inhibits termination of circadian target genes. Interacts with the nuclear receptors HNF4A, NR1D1, NR4A2, RORA, PPARA, PPARG and THRA; the interaction with at least PPARG is ligand dependent. Interacts with PML. Interacts (phosphorylated) with BTRC and FBXW11; the interactions trigger proteasomal degradation. Interacts with NONO and SFPQ. Interacts with PRKCDBP. Interacts with MAGEL2. Interacts with MAP1LC3B. Interacts with HNF4A. In terms of processing, acetylated. Deacetylated by SIRT1, resulting in decreased protein stability. Deacetylated by SIRT6, preventing its degradation by the proteasome, resulting in increased protein stability. Phosphorylated by CSNK1E and CSNK1D. Phosphorylation results in PER2 protein degradation. May be dephosphorylated by PP1. Post-translationally, ubiquitinated, leading to its proteasomal degradation. Ubiquitination may be inhibited by CRY1. Expressed in the brain, mainly in the suprachiasmatic nucleus (SCN). Expression also found in the harderian gland, lung, eye, intestine, liver and skeletal muscle.

The protein localises to the nucleus. It is found in the cytoplasm. It localises to the perinuclear region. Its function is as follows. Transcriptional repressor which forms a core component of the circadian clock. The circadian clock, an internal time-keeping system, regulates various physiological processes through the generation of approximately 24 hour circadian rhythms in gene expression, which are translated into rhythms in metabolism and behavior. It is derived from the Latin roots 'circa' (about) and 'diem' (day) and acts as an important regulator of a wide array of physiological functions including metabolism, sleep, body temperature, blood pressure, endocrine, immune, cardiovascular, and renal function. Consists of two major components: the central clock, residing in the suprachiasmatic nucleus (SCN) of the brain, and the peripheral clocks that are present in nearly every tissue and organ system. Both the central and peripheral clocks can be reset by environmental cues, also known as Zeitgebers (German for 'timegivers'). The predominant Zeitgeber for the central clock is light, which is sensed by retina and signals directly to the SCN. The central clock entrains the peripheral clocks through neuronal and hormonal signals, body temperature and feeding-related cues, aligning all clocks with the external light/dark cycle. Circadian rhythms allow an organism to achieve temporal homeostasis with its environment at the molecular level by regulating gene expression to create a peak of protein expression once every 24 hours to control when a particular physiological process is most active with respect to the solar day. Transcription and translation of core clock components (CLOCK, NPAS2, BMAL1, BMAL2, PER1, PER2, PER3, CRY1 and CRY2) plays a critical role in rhythm generation, whereas delays imposed by post-translational modifications (PTMs) are important for determining the period (tau) of the rhythms (tau refers to the period of a rhythm and is the length, in time, of one complete cycle). A diurnal rhythm is synchronized with the day/night cycle, while the ultradian and infradian rhythms have a period shorter and longer than 24 hours, respectively. Disruptions in the circadian rhythms contribute to the pathology of cardiovascular diseases, cancer, metabolic syndrome and aging. A transcription/translation feedback loop (TTFL) forms the core of the molecular circadian clock mechanism. Transcription factors, CLOCK or NPAS2 and BMAL1 or BMAL2, form the positive limb of the feedback loop, act in the form of a heterodimer and activate the transcription of core clock genes and clock-controlled genes (involved in key metabolic processes), harboring E-box elements (5'-CACGTG-3') within their promoters. The core clock genes: PER1/2/3 and CRY1/2 which are transcriptional repressors form the negative limb of the feedback loop and interact with the CLOCK|NPAS2-BMAL1|BMAL2 heterodimer inhibiting its activity and thereby negatively regulating their own expression. This heterodimer also activates nuclear receptors NR1D1/2 and RORA/B/G, which form a second feedback loop and which activate and repress BMAL1 transcription, respectively. PER1 and PER2 proteins transport CRY1 and CRY2 into the nucleus with appropriate circadian timing, but also contribute directly to repression of clock-controlled target genes through interaction with several classes of RNA-binding proteins, helicases and others transcriptional repressors. PER appears to regulate circadian control of transcription by at least three different modes. First, interacts directly with the CLOCK-BMAL1 at the tail end of the nascent transcript peak to recruit complexes containing the SIN3-HDAC that remodel chromatin to repress transcription. Second, brings H3K9 methyltransferases such as SUV39H1 and SUV39H2 to the E-box elements of the circadian target genes, like PER2 itself or PER1. The recruitment of each repressive modifier to the DNA seems to be very precisely temporally orchestrated by the large PER complex, the deacetylases acting before than the methyltransferases. Additionally, large PER complexes are also recruited to the target genes 3' termination site through interactions with RNA-binding proteins and helicases that may play a role in transcription termination to regulate transcription independently of CLOCK-BMAL1 interactions. Recruitment of large PER complexes to the elongating polymerase at PER and CRY termination sites inhibited SETX action, impeding RNA polymerase II release and thereby repressing transcriptional reinitiation. May propagate clock information to metabolic pathways via the interaction with nuclear receptors. Coactivator of PPARA and corepressor of NR1D1, binds rhythmically at the promoter of nuclear receptors target genes like BMAL1 or G6PC1. Directly and specifically represses PPARG proadipogenic activity by blocking PPARG recruitment to target promoters and thereby transcriptional activation. Required for fatty acid and lipid metabolism, is involved as well in the regulation of circulating insulin levels. Plays an important role in the maintenance of cardiovascular functions through the regulation of NO and vasodilatatory prostaglandins production in aortas. Controls circadian glutamate uptake in synaptic vesicles through the regulation of VGLUT1 expression. May also be involved in the regulation of inflammatory processes. Represses the CLOCK-BMAL1 induced transcription of BHLHE40/DEC1 and ATF4. Negatively regulates the formation of the TIMELESS-CRY1 complex by competing with TIMELESS for binding to CRY1. This Spalax judaei (Judean Mountains blind mole rat) protein is Period circadian protein homolog 2 (PER2).